A 335-amino-acid polypeptide reads, in one-letter code: Atypical chemokine receptor 1 (335 aa).

Residues 1–62 (MGNCLHPAEL…CNLLDDSALP (62 aa)) are Extracellular-facing. Residues N16, N26, and N32 are each glycosylated (N-linked (GlcNAc...) asparagine). 2 disulfide bridges follow: C50-C275 and C128-C194. Residues 63-83 (FFILVSVLGILASGTVLFMFF) traverse the membrane as a helical segment. The Cytoplasmic portion of the chain corresponds to 84–94 (RPLFHWQLCPG). Residues 95-115 (WPVLAQLAVGSALFSIVVPIL) form a helical membrane-spanning segment. Residues 116–128 (APGLGNTRSSALC) lie on the Extracellular side of the membrane. A helical transmembrane segment spans residues 129–152 (SLGYCVWYGSAFAQALLLGCHASL). Residues 153–165 (GPKLGAGQVPGLT) are Cytoplasmic-facing. Residues 166-186 (LGLSVGLWGVAALLTLPITLA) traverse the membrane as a helical segment. At 187 to 206 (SGASGGLCTPAYSMELKALQ) the chain is on the extracellular side. A helical membrane pass occupies residues 207–227 (ATHAVACLAVFVLLPLGLFGA). At 228–243 (KGLKKALGMGPGPWMN) the chain is on the cytoplasmic side. A helical membrane pass occupies residues 244–264 (ILWAWFIFWWPHGVVLGLDFL). At 265-286 (VRSKLLLLSTCLAQQALDLLLN) the chain is on the extracellular side. Residues 287–307 (LAEALAILHCVATPLLLALFC) form a helical membrane-spanning segment. The Cytoplasmic segment spans residues 308-335 (HQATRTLLPSLPLPEGWSSHLDTLGSES).

This sequence belongs to the G-protein coupled receptor 1 family. Atypical chemokine receptor subfamily. In terms of assembly, (Microbial infection) Interacts (via N-terminal extracellular domain) with Plasmodium knowlesi Duffy receptor alpha form (DBPalpha) (via region II).

It localises to the early endosome. It is found in the recycling endosome. The protein resides in the membrane. Atypical chemokine receptor that controls chemokine levels and localization via high-affinity chemokine binding that is uncoupled from classic ligand-driven signal transduction cascades, resulting instead in chemokine sequestration, degradation, or transcytosis. Also known as interceptor (internalizing receptor) or chemokine-scavenging receptor or chemokine decoy receptor. Has a promiscuous chemokine-binding profile, interacting with inflammatory chemokines of both the CXC and the CC subfamilies but not with homeostatic chemokines. Acts as a receptor for chemokines including CCL2, CCL5, CCL7, CCL11, CCL13, CCL14, CCL17, CXCL5, CXCL6, IL8/CXCL8, CXCL11, GRO, RANTES, MCP-1 and TARC. May regulate chemokine bioavailability and, consequently, leukocyte recruitment through two distinct mechanisms: when expressed in endothelial cells, it sustains the abluminal to luminal transcytosis of tissue-derived chemokines and their subsequent presentation to circulating leukocytes; when expressed in erythrocytes, serves as blood reservoir of cognate chemokines but also as a chemokine sink, buffering potential surges in plasma chemokine levels. Functionally, (Microbial infection) Acts as a receptor for the malaria parasite Plasmodium knowlesi. The polypeptide is Atypical chemokine receptor 1 (ACKR1) (Macaca mulatta (Rhesus macaque)).